The chain runs to 413 residues: 3-isopropylmalate dehydratase large subunit (413 aa).

C293, C353, and C356 together coordinate [4Fe-4S] cluster.

It belongs to the aconitase/IPM isomerase family. LeuC type 2 subfamily. Heterodimer of LeuC and LeuD. It depends on [4Fe-4S] cluster as a cofactor.

It catalyses the reaction (2R,3S)-3-isopropylmalate = (2S)-2-isopropylmalate. The protein operates within amino-acid biosynthesis; L-leucine biosynthesis; L-leucine from 3-methyl-2-oxobutanoate: step 2/4. In terms of biological role, catalyzes the isomerization between 2-isopropylmalate and 3-isopropylmalate, via the formation of 2-isopropylmaleate. This Picrophilus torridus (strain ATCC 700027 / DSM 9790 / JCM 10055 / NBRC 100828 / KAW 2/3) protein is 3-isopropylmalate dehydratase large subunit.